The chain runs to 308 residues: Ribosomal RNA small subunit methyltransferase H (308 aa).

S-adenosyl-L-methionine is bound by residues 33–35 (GGH), aspartate 52, tyrosine 81, aspartate 99, and glutamine 106.

It belongs to the methyltransferase superfamily. RsmH family.

The protein resides in the cytoplasm. It catalyses the reaction cytidine(1402) in 16S rRNA + S-adenosyl-L-methionine = N(4)-methylcytidine(1402) in 16S rRNA + S-adenosyl-L-homocysteine + H(+). Specifically methylates the N4 position of cytidine in position 1402 (C1402) of 16S rRNA. The sequence is that of Ribosomal RNA small subunit methyltransferase H from Francisella philomiragia subsp. philomiragia (strain ATCC 25017 / CCUG 19701 / FSC 153 / O#319-036).